Reading from the N-terminus, the 192-residue chain is UPF0301 protein Rru_A3059 (192 aa).

The protein belongs to the UPF0301 (AlgH) family.

The polypeptide is UPF0301 protein Rru_A3059 (Rhodospirillum rubrum (strain ATCC 11170 / ATH 1.1.1 / DSM 467 / LMG 4362 / NCIMB 8255 / S1)).